Here is a 95-residue protein sequence, read N- to C-terminus: Small ribosomal subunit protein uS19 (95 aa).

Belongs to the universal ribosomal protein uS19 family.

Its function is as follows. Protein S19 forms a complex with S13 that binds strongly to the 16S ribosomal RNA. This Thermosipho africanus (strain TCF52B) protein is Small ribosomal subunit protein uS19.